A 175-amino-acid chain; its full sequence is Nucleoside-triphosphatase THEP1 (175 aa).

ATP-binding positions include 8–15 and 99–106; these read GSPGVGKS and LVVIDEIG.

The protein belongs to the THEP1 NTPase family.

The catalysed reaction is a ribonucleoside 5'-triphosphate + H2O = a ribonucleoside 5'-diphosphate + phosphate + H(+). In terms of biological role, has nucleotide phosphatase activity towards ATP, GTP, CTP, TTP and UTP. May hydrolyze nucleoside diphosphates with lower efficiency. The protein is Nucleoside-triphosphatase THEP1 of Methanosarcina acetivorans (strain ATCC 35395 / DSM 2834 / JCM 12185 / C2A).